Here is a 128-residue protein sequence, read N- to C-terminus: Holo-[acyl-carrier-protein] synthase (128 aa).

Asp-9 and Glu-60 together coordinate Mg(2+).

Belongs to the P-Pant transferase superfamily. AcpS family. Requires Mg(2+) as cofactor.

It localises to the cytoplasm. The enzyme catalyses apo-[ACP] + CoA = holo-[ACP] + adenosine 3',5'-bisphosphate + H(+). Its function is as follows. Transfers the 4'-phosphopantetheine moiety from coenzyme A to a Ser of acyl-carrier-protein. This chain is Holo-[acyl-carrier-protein] synthase, found in Buchnera aphidicola subsp. Baizongia pistaciae (strain Bp).